We begin with the raw amino-acid sequence, 607 residues long: Isocitrate dehydrogenase kinase/phosphatase (607 aa).

Residues 328 to 334 (APGIKGL) and Lys349 contribute to the ATP site. The active site involves Asp384.

It belongs to the AceK family.

The protein localises to the cytoplasm. It carries out the reaction L-seryl-[isocitrate dehydrogenase] + ATP = O-phospho-L-seryl-[isocitrate dehydrogenase] + ADP + H(+). Functionally, bifunctional enzyme which can phosphorylate or dephosphorylate isocitrate dehydrogenase (IDH) on a specific serine residue. This is a regulatory mechanism which enables bacteria to bypass the Krebs cycle via the glyoxylate shunt in response to the source of carbon. When bacteria are grown on glucose, IDH is fully active and unphosphorylated, but when grown on acetate or ethanol, the activity of IDH declines drastically concomitant with its phosphorylation. This Cupriavidus metallidurans (strain ATCC 43123 / DSM 2839 / NBRC 102507 / CH34) (Ralstonia metallidurans) protein is Isocitrate dehydrogenase kinase/phosphatase.